The primary structure comprises 441 residues: Queuine tRNA-ribosyltransferase accessory subunit 2 (441 aa).

Zn(2+)-binding residues include C307, C309, C312, and H338.

Belongs to the queuine tRNA-ribosyltransferase family. QTRT2 subfamily. In terms of assembly, heterodimer of a catalytic subunit and an accessory subunit. The cofactor is Zn(2+).

It localises to the cytoplasm. Its function is as follows. Non-catalytic subunit of the queuine tRNA-ribosyltransferase (TGT) that catalyzes the base-exchange of a guanine (G) residue with queuine (Q) at position 34 (anticodon wobble position) in tRNAs with GU(N) anticodons (tRNA-Asp, -Asn, -His and -Tyr), resulting in the hypermodified nucleoside queuosine (7-(((4,5-cis-dihydroxy-2-cyclopenten-1-yl)amino)methyl)-7-deazaguanosine). In Schizosaccharomyces pombe (strain 972 / ATCC 24843) (Fission yeast), this protein is Queuine tRNA-ribosyltransferase accessory subunit 2 (qtr2).